We begin with the raw amino-acid sequence, 216 residues long: Holliday junction branch migration complex subunit RuvA (216 aa).

The interval 1-64 (MISFIKGVLI…EDAQQLYGFK (64 aa)) is domain I. A domain II region spans residues 65-143 (SKVDKKVFQE…KMANEIYAQT (79 aa)). The segment at 144-163 (SGTTTTSQDSQAQQAPTSVV) is flexible linker. Positions 164-216 (LANSIFNESVDALLALGYKQKDAEKMARSAMGDATTAAEVIRKALQGSIKSKG) are domain III.

The protein belongs to the RuvA family. As to quaternary structure, homotetramer. Forms an RuvA(8)-RuvB(12)-Holliday junction (HJ) complex. HJ DNA is sandwiched between 2 RuvA tetramers; dsDNA enters through RuvA and exits via RuvB. An RuvB hexamer assembles on each DNA strand where it exits the tetramer. Each RuvB hexamer is contacted by two RuvA subunits (via domain III) on 2 adjacent RuvB subunits; this complex drives branch migration. In the full resolvosome a probable DNA-RuvA(4)-RuvB(12)-RuvC(2) complex forms which resolves the HJ.

The protein resides in the cytoplasm. Functionally, the RuvA-RuvB-RuvC complex processes Holliday junction (HJ) DNA during genetic recombination and DNA repair, while the RuvA-RuvB complex plays an important role in the rescue of blocked DNA replication forks via replication fork reversal (RFR). RuvA specifically binds to HJ cruciform DNA, conferring on it an open structure. The RuvB hexamer acts as an ATP-dependent pump, pulling dsDNA into and through the RuvAB complex. HJ branch migration allows RuvC to scan DNA until it finds its consensus sequence, where it cleaves and resolves the cruciform DNA. The chain is Holliday junction branch migration complex subunit RuvA from Francisella tularensis subsp. holarctica (strain FTNF002-00 / FTA).